A 348-amino-acid polypeptide reads, in one-letter code: Holliday junction branch migration complex subunit RuvB (348 aa).

The segment covering 1–10 (MAIVSSNAGS) has biased composition (polar residues). A disordered region spans residues 1–41 (MAIVSSNAGSSAPRREPVLDAQPLPEESSGRPDDGLRPKRL). The segment at 13-197 (PRREPVLDAQ…FGLIQRLEFY (185 aa)) is large ATPase domain (RuvB-L). Positions 28–41 (SSGRPDDGLRPKRL) are enriched in basic and acidic residues. Residues L36, R37, G78, K81, T82, T83, R187, Y197, and R234 each coordinate ATP. T82 lines the Mg(2+) pocket. Positions 198–269 (GQEDLEAIVS…LVSQALSLHR (72 aa)) are small ATPAse domain (RuvB-S). Residues 272-348 (HRGLDAGDRR…RAHLREQEVA (77 aa)) form a head domain (RuvB-H) region. Residues R327 and R332 each contribute to the DNA site.

The protein belongs to the RuvB family. In terms of assembly, homohexamer. Forms an RuvA(8)-RuvB(12)-Holliday junction (HJ) complex. HJ DNA is sandwiched between 2 RuvA tetramers; dsDNA enters through RuvA and exits via RuvB. An RuvB hexamer assembles on each DNA strand where it exits the tetramer. Each RuvB hexamer is contacted by two RuvA subunits (via domain III) on 2 adjacent RuvB subunits; this complex drives branch migration. In the full resolvosome a probable DNA-RuvA(4)-RuvB(12)-RuvC(2) complex forms which resolves the HJ.

The protein localises to the cytoplasm. It catalyses the reaction ATP + H2O = ADP + phosphate + H(+). In terms of biological role, the RuvA-RuvB-RuvC complex processes Holliday junction (HJ) DNA during genetic recombination and DNA repair, while the RuvA-RuvB complex plays an important role in the rescue of blocked DNA replication forks via replication fork reversal (RFR). RuvA specifically binds to HJ cruciform DNA, conferring on it an open structure. The RuvB hexamer acts as an ATP-dependent pump, pulling dsDNA into and through the RuvAB complex. RuvB forms 2 homohexamers on either side of HJ DNA bound by 1 or 2 RuvA tetramers; 4 subunits per hexamer contact DNA at a time. Coordinated motions by a converter formed by DNA-disengaged RuvB subunits stimulates ATP hydrolysis and nucleotide exchange. Immobilization of the converter enables RuvB to convert the ATP-contained energy into a lever motion, pulling 2 nucleotides of DNA out of the RuvA tetramer per ATP hydrolyzed, thus driving DNA branch migration. The RuvB motors rotate together with the DNA substrate, which together with the progressing nucleotide cycle form the mechanistic basis for DNA recombination by continuous HJ branch migration. Branch migration allows RuvC to scan DNA until it finds its consensus sequence, where it cleaves and resolves cruciform DNA. The sequence is that of Holliday junction branch migration complex subunit RuvB from Parasynechococcus marenigrum (strain WH8102).